The chain runs to 94 residues: MNIKPFGDRVVIKKVEAEEKTASGIVLPGAAKEQPQIAEVVEVGPGGIVEGKEIKMELTVGDKVIFQKYSGTEVKIEGQEYTILRQSDVLAVIE.

Belongs to the GroES chaperonin family. In terms of assembly, heptamer of 7 subunits arranged in a ring. Interacts with the chaperonin GroEL.

The protein localises to the cytoplasm. In terms of biological role, together with the chaperonin GroEL, plays an essential role in assisting protein folding. The GroEL-GroES system forms a nano-cage that allows encapsulation of the non-native substrate proteins and provides a physical environment optimized to promote and accelerate protein folding. GroES binds to the apical surface of the GroEL ring, thereby capping the opening of the GroEL channel. This Clostridioides difficile (Peptoclostridium difficile) protein is Co-chaperonin GroES.